Here is a 176-residue protein sequence, read N- to C-terminus: Probable inosine/xanthosine triphosphatase (176 aa).

A Mg(2+)-binding site is contributed by Asp-36.

This sequence belongs to the YjjX NTPase family. In terms of assembly, homodimer. Mg(2+) serves as cofactor. Requires Mn(2+) as cofactor.

It catalyses the reaction XTP + H2O = XDP + phosphate + H(+). The enzyme catalyses ITP + H2O = IDP + phosphate + H(+). Phosphatase that hydrolyzes non-canonical purine nucleotides such as XTP and ITP to their respective diphosphate derivatives. Probably excludes non-canonical purines from DNA/RNA precursor pool, thus preventing their incorporation into DNA/RNA and avoiding chromosomal lesions. The sequence is that of Probable inosine/xanthosine triphosphatase from Saccharolobus islandicus (strain M.14.25 / Kamchatka #1) (Sulfolobus islandicus).